Here is a 172-residue protein sequence, read N- to C-terminus: Nicotinamide-nucleotide adenylyltransferase (172 aa).

Belongs to the archaeal NMN adenylyltransferase family.

It localises to the cytoplasm. The catalysed reaction is beta-nicotinamide D-ribonucleotide + ATP + H(+) = diphosphate + NAD(+). It functions in the pathway cofactor biosynthesis; NAD(+) biosynthesis; NAD(+) from nicotinamide D-ribonucleotide: step 1/1. This Saccharolobus solfataricus (strain ATCC 35092 / DSM 1617 / JCM 11322 / P2) (Sulfolobus solfataricus) protein is Nicotinamide-nucleotide adenylyltransferase.